The following is a 185-amino-acid chain: Small ribosomal subunit protein uS7 (185 aa).

The protein belongs to the universal ribosomal protein uS7 family. As to quaternary structure, part of the 30S ribosomal subunit.

Functionally, one of the primary rRNA binding proteins, it binds directly to 16S rRNA where it nucleates assembly of the head domain of the 30S subunit. Is located at the subunit interface close to the decoding center. This Methanothrix thermoacetophila (strain DSM 6194 / JCM 14653 / NBRC 101360 / PT) (Methanosaeta thermophila) protein is Small ribosomal subunit protein uS7.